The following is a 590-amino-acid chain: UvrABC system protein C (590 aa).

Residues 14–91 (EQPGCYLMKD…IKKHDPKYNV (78 aa)) enclose the GIY-YIG domain. Residues 196–231 (EDVKRELAEKMHEAAETLEFERAKEYRDQIAAIEMT) enclose the UVR domain.

The protein belongs to the UvrC family. As to quaternary structure, interacts with UvrB in an incision complex.

It is found in the cytoplasm. Functionally, the UvrABC repair system catalyzes the recognition and processing of DNA lesions. UvrC both incises the 5' and 3' sides of the lesion. The N-terminal half is responsible for the 3' incision and the C-terminal half is responsible for the 5' incision. This chain is UvrABC system protein C, found in Geobacillus kaustophilus (strain HTA426).